Here is a 372-residue protein sequence, read N- to C-terminus: MVNVVLAGGGTAGHTSPLIATAMALQERGATVSCIGTPRGLEGRVIPEAGLQLDMIPPVPLPRTVNADLFKVPARLAGAVRKAGEVLQRRQTDVVVGFGGYVSLPAYLAARRAKIPVVIHEQNAVPGLANKIAARFAVFVGTAFPDTPLPKARFVGMPLRSQITDLADASGQARAERCARARADLGLDINRPTLLVSGGSQGAVAINEAVVAARTRLLADGVQILHVLGPKNIRGATRITDELTGASWLPMGYVDDMASAYAAADLMVARSGAGTVVETATVGLPTIYVPLPHGNGEQARNATSAVDAGAGVVVANADLDVERLLAETARIHDADVLAQMSAAGRGLMPAHAAEEMAVRVISAATSIDPTIG.

Residues 11-13 (TAG), Asn123, Arg160, Ser200, and Gln298 contribute to the UDP-N-acetyl-alpha-D-glucosamine site.

The protein belongs to the glycosyltransferase 28 family. MurG subfamily.

It localises to the cell membrane. The enzyme catalyses di-trans,octa-cis-undecaprenyl diphospho-N-acetyl-alpha-D-muramoyl-L-alanyl-D-glutamyl-meso-2,6-diaminopimeloyl-D-alanyl-D-alanine + UDP-N-acetyl-alpha-D-glucosamine = di-trans,octa-cis-undecaprenyl diphospho-[N-acetyl-alpha-D-glucosaminyl-(1-&gt;4)]-N-acetyl-alpha-D-muramoyl-L-alanyl-D-glutamyl-meso-2,6-diaminopimeloyl-D-alanyl-D-alanine + UDP + H(+). It participates in cell wall biogenesis; peptidoglycan biosynthesis. Functionally, cell wall formation. Catalyzes the transfer of a GlcNAc subunit on undecaprenyl-pyrophosphoryl-MurNAc-pentapeptide (lipid intermediate I) to form undecaprenyl-pyrophosphoryl-MurNAc-(pentapeptide)GlcNAc (lipid intermediate II). In Cutibacterium acnes (strain DSM 16379 / KPA171202) (Propionibacterium acnes), this protein is UDP-N-acetylglucosamine--N-acetylmuramyl-(pentapeptide) pyrophosphoryl-undecaprenol N-acetylglucosamine transferase.